The sequence spans 160 residues: Troponin C, skeletal muscle (160 aa).

Residue Thr2 is modified to N-acetylthreonine. EF-hand domains lie at 15-50, 51-86, 91-126, and 127-160; these read EMIA…LGQT, PTKE…QMKE, KSEE…SGEH, and VTDE…EGVQ. Residues Asp28, Asp30, Asp34, Glu39, Asp64, Asp66, Ser68, Thr70, Glu75, Asp104, Asn106, Asp108, Tyr110, Glu115, Asp140, Asn142, Asp144, Arg146, and Glu151 each contribute to the Ca(2+) site.

This sequence belongs to the troponin C family.

In terms of biological role, troponin is the central regulatory protein of striated muscle contraction. Tn consists of three components: Tn-I which is the inhibitor of actomyosin ATPase, Tn-T which contains the binding site for tropomyosin and Tn-C. The binding of calcium to Tn-C abolishes the inhibitory action of Tn on actin filaments. This Oryctolagus cuniculus (Rabbit) protein is Troponin C, skeletal muscle (TNNC2).